Here is a 539-residue protein sequence, read N- to C-terminus: 3-methylmercaptopropionyl-CoA ligase (539 aa).

Thr185 contributes to the Mg(2+) binding site. ATP is bound by residues His231, Gly303, His324, Ala325, and Ser329. Glu330 is a Mg(2+) binding site. Residues Gln359, Asp417, Arg432, and Lys523 each coordinate ATP.

It belongs to the ATP-dependent AMP-binding enzyme family. In terms of assembly, homodimer. Requires Mg(2+) as cofactor.

It catalyses the reaction 3-(methylsulfanyl)propanoate + ATP + CoA = 3-(methylsulfanyl)propanoyl-CoA + AMP + diphosphate. Its activity is regulated as follows. ADP acts as a competitive inhibitor and inhibits the ligase activity. Functionally, involved in the assimilation of dimethylsulphoniopropionate (DMSP), an important compound in the fixation of carbon in marine phytoplankton. Catalyzes the ATP-dependent ligation of methylmercaptopropionate (MMPA) and CoA to yield methylmercaptopropionate-CoA (MMPA-CoA). This chain is 3-methylmercaptopropionyl-CoA ligase, found in Ruegeria lacuscaerulensis (strain DSM 11314 / KCTC 2953 / ITI-1157) (Silicibacter lacuscaerulensis).